The primary structure comprises 63 residues: Large ribosomal subunit protein uL30 (63 aa).

The protein belongs to the universal ribosomal protein uL30 family. As to quaternary structure, part of the 50S ribosomal subunit.

The polypeptide is Large ribosomal subunit protein uL30 (Methylobacterium sp. (strain 4-46)).